The chain runs to 962 residues: MREESWEDHDTIQLTAQRKYLAEVQALETLLTRELSVFLTEPGSKKTNIINRITGKTYALPSTELLRLYEHLEQCRKQGALMYFLERQGTYSGLMLDYDLKLNTNAAPPLEPPALSRLCHRIFVHIKNSSVLPEGSHKIHFFFTLKPEVVQGKYGFHVLIPGLKLAASTKKSIIGSLQHDATVQKILHEQGVANPESCLDPHSASVPSLLYGSSKLNHKPYQLKTGFELVFDSSDPDYIPIHQIKNIESYNLVSELSLTNEQGSLVRPVYCAADIAAEKEEEIPTEDHSLSILMLHDPEARYLHKILNLLPPEYYVEYPLWSNVVFALANTSANYRPLAEWFSQKCPEKWNTGGKEKLEQLWNDASRHTEKKITKRSIMYWAHKHAPQQYKEIVEQGYFSILAEYVYSYNGMLEHYMIAKVIYAMMGNKFVVDVDSNGKYVWFEFVLPGQPMNQGEIWKWRKEVNPDELHIYISENFSRVMDRITEHIKYHLSQPHETNILNYYKKLLKAFERSKSKIFNDSFKKGVIRQAEFLFRQRSFIQTLDTNPHLLGVGNGVLSIETIPAKLINHFHEHPIHQYTHICYVPFNPENPWTKLLLNALQDIIPELDARLWIMFYLSTAIFRGLKEALMLLWLGGGCNGKTFLMRLVAMVLGDHYASKLNISLLTSYRETAEKPNSAFMRLKGRGYGYFEETNKSEVLNTSRLKEMVNPGDVTARELNQKQESFQMTATMVAASNYNFIIDTTDHGTWRRLRHYRSKVKFCHNPDPNNSYEKKEDPRFIHEYIMDPNCQNAFFSILVYFWEKLQKEYNGQIKKVFCPTIESETEAYRKSQDTLHRFITERIVESPSAETVYNLSEVVTAYAEWYNANINVKRHIALELSQELENSVLEKYLQWSPNKTRILKGCRILHKFETLQPGESYIGVSTAGTLLNTPICEPKNKWWEWSPNPSAPPEKEASAPTP.

The SF3 helicase domain occupies 607 to 775 (ELDARLWIMF…PDPNNSYEKK (169 aa)). 636–643 (GGGCNGKT) is a binding site for ATP.

This sequence belongs to the asfivirus helicase C962R family.

This is Putative primase C962R from African swine fever virus (isolate Warthog/Namibia/Wart80/1980) (ASFV).